Here is a 289-residue protein sequence, read N- to C-terminus: Homeobox protein Nkx-2.6 (289 aa).

Disordered stretches follow at residues 75–125 (GSNP…PQRK) and 259–289 (TPLA…VTAW). The segment at residues 123-182 (QRKSRVLFSQAQVLALERRFKQQRYLTAPEREHLASALQLTSTQVKIWFQNRRYKSKSQR) is a DNA-binding region (homeobox). Residues 261 to 274 (LASSGFSPGGQSAA) are compositionally biased toward polar residues.

This sequence belongs to the NK-2 homeobox family. As to expression, not detected in any neonate or adult tissues.

It is found in the nucleus. Its function is as follows. Acts as a transcriptional activator. In conjunction with NKX2-5, may play a role in both pharyngeal and cardiac embryonic development. The protein is Homeobox protein Nkx-2.6 (Nkx2-6) of Mus musculus (Mouse).